Here is a 266-residue protein sequence, read N- to C-terminus: MSLISADNIVKIYQSHSLVGASARKTMLHDISISIGQGETVALLGRSGCGKSTLARLLVGLERPTSGEVRFRGVPLTKLDRSGMKAFRREVQLIFQDSPGAVNARSSVRAIIGEPLRHLTSLDETRREERIQELLRLVELPPEIADRLPAQVSGGQLQRICIARALAVNPKLIILDEAVSNLDIHLQASALALLTKLQQEGGIAYLFVTHDLRLVQKFAARCLVMDEGQIVEEIKTADLDSMRHPASRLLREAVLPPLPVRAVETN.

The ABC transporter domain maps to 4 to 252; the sequence is ISADNIVKIY…RHPASRLLRE (249 aa). 45 to 52 contributes to the ATP binding site; that stretch reads GRSGCGKS.

This sequence belongs to the ABC transporter superfamily. Nickel importer (TC 3.A.1.5.3) family. In terms of assembly, the complex is composed of two ATP-binding proteins (NikD and NikE), two transmembrane proteins (NikB and NikC) and a solute-binding protein (NikA).

It is found in the cell inner membrane. It carries out the reaction Ni(2+)(out) + ATP + H2O = Ni(2+)(in) + ADP + phosphate + H(+). Functionally, part of the ABC transporter complex NikABCDE involved in nickel import. Responsible for energy coupling to the transport system. In Brucella abortus (strain 2308), this protein is Nickel import ATP-binding protein NikE.